The following is a 63-amino-acid chain: Hyphancin-3E (63 aa).

Residues 1 to 22 form the signal peptide; that stretch reads MNFSRILFFVFTCFVALASVSG. Residues 23-26 constitute a propeptide, removed by a dipeptidylpeptidase; it reads APEP. Leucine 61 is subject to Leucine amide.

It belongs to the cecropin family.

It is found in the secreted. In terms of biological role, has antibacterial activity. This is Hyphancin-3E from Hyphantria cunea (Fall webworm moth).